A 363-amino-acid chain; its full sequence is Chorismate synthase (363 aa).

Residues Arg-48 and Arg-54 each coordinate NADP(+). FMN-binding positions include Arg-125 to Ser-127, Asn-237 to Ala-238, Gly-277, Lys-292 to Ser-296, and Arg-318.

It belongs to the chorismate synthase family. In terms of assembly, homotetramer. It depends on FMNH2 as a cofactor.

The catalysed reaction is 5-O-(1-carboxyvinyl)-3-phosphoshikimate = chorismate + phosphate. It participates in metabolic intermediate biosynthesis; chorismate biosynthesis; chorismate from D-erythrose 4-phosphate and phosphoenolpyruvate: step 7/7. Its function is as follows. Catalyzes the anti-1,4-elimination of the C-3 phosphate and the C-6 proR hydrogen from 5-enolpyruvylshikimate-3-phosphate (EPSP) to yield chorismate, which is the branch point compound that serves as the starting substrate for the three terminal pathways of aromatic amino acid biosynthesis. This reaction introduces a second double bond into the aromatic ring system. In Pseudomonas putida (strain W619), this protein is Chorismate synthase.